Reading from the N-terminus, the 87-residue chain is Lantipeptide prochlorosin 3.3 (87 aa).

Positions 1–64 are excised as a propeptide; that stretch reads MSEEQLKAFI…DEELEAASGG (64 aa). At T67 the chain carries 2,3-didehydrobutyrine. Positions 75–85 form a cross-link, beta-methyllanthionine (Thr-Cys); sequence TAGCYGGTKMC. The beta-methyllanthionine (Cys-Thr) cross-link spans 78-82; the sequence is CYGGT.

In terms of processing, cross-links are proved in vitro, when coepressed in E.coli with the ProcM lanthionine synthetase. The beta-methyllanthionine residues have a DL configuration (with 2S,3S,6R stereochemistry). Post-translationally, maturation of prochlorosin involves the enzymatic conversion of Thr, and Ser into dehydrated AA and the formation of thioether bonds with cysteines. This is followed by membrane translocation and cleavage of the modified precursor.

It is found in the secreted. In terms of biological role, lanthionine-containing peptide (lantipeptide) with unknown function. Does not show antibiotic activity against Lactococcus lactis 117 and Bacillus subtilis 6633 bacteria. Organisms that produce this peptide live in oligotrophic environments at very dilute concentrations, suggesting this peptide is not secreted to influence other bacteria. The chain is Lantipeptide prochlorosin 3.3 from Prochlorococcus marinus (strain MIT 9313).